We begin with the raw amino-acid sequence, 186 residues long: Phosphoheptose isomerase 1 (186 aa).

Residues 33–186 enclose the SIS domain; sequence LCECLKKGGK…TLCQIIDESF (154 aa). 48-50 serves as a coordination point for substrate; that stretch reads NGG. Residues H57 and E61 each contribute to the Zn(2+) site. Residues E61, 90–91, 116–118, S121, and Q168 each bind substrate; these read ND and STS. Residues Q168 and H176 each contribute to the Zn(2+) site.

It belongs to the SIS family. GmhA subfamily. As to quaternary structure, homotetramer. Zn(2+) serves as cofactor.

It is found in the cytoplasm. It catalyses the reaction 2 D-sedoheptulose 7-phosphate = D-glycero-alpha-D-manno-heptose 7-phosphate + D-glycero-beta-D-manno-heptose 7-phosphate. It functions in the pathway carbohydrate biosynthesis; D-glycero-D-manno-heptose 7-phosphate biosynthesis; D-glycero-alpha-D-manno-heptose 7-phosphate and D-glycero-beta-D-manno-heptose 7-phosphate from sedoheptulose 7-phosphate: step 1/1. The protein operates within bacterial outer membrane biogenesis; LOS core biosynthesis. In terms of biological role, catalyzes the isomerization of sedoheptulose 7-phosphate in D-glycero-D-manno-heptose 7-phosphate. The chain is Phosphoheptose isomerase 1 (gmhA1) from Campylobacter jejuni subsp. jejuni serotype O:2 (strain ATCC 700819 / NCTC 11168).